The chain runs to 234 residues: 7-cyano-7-deazaguanine synthase (234 aa).

15-25 serves as a coordination point for ATP; it reads LSGGLDSSTCL. Residues C199, C208, C211, and C214 each coordinate Zn(2+).

The protein belongs to the QueC family. The cofactor is Zn(2+).

The catalysed reaction is 7-carboxy-7-deazaguanine + NH4(+) + ATP = 7-cyano-7-deazaguanine + ADP + phosphate + H2O + H(+). Its pathway is purine metabolism; 7-cyano-7-deazaguanine biosynthesis. Functionally, catalyzes the ATP-dependent conversion of 7-carboxy-7-deazaguanine (CDG) to 7-cyano-7-deazaguanine (preQ(0)). The sequence is that of 7-cyano-7-deazaguanine synthase from Anaeromyxobacter dehalogenans (strain 2CP-C).